A 377-amino-acid polypeptide reads, in one-letter code: Queuine tRNA-ribosyltransferase (377 aa).

Asp89 functions as the Proton acceptor in the catalytic mechanism. Substrate contacts are provided by residues 89-93, Asp143, Gln187, and Gly214; that span reads DSGGF. The interval 245-251 is RNA binding; sequence GVGKPED. Asp264 functions as the Nucleophile in the catalytic mechanism. The RNA binding; important for wobble base 34 recognition stretch occupies residues 269–273; that stretch reads TRNAR. Zn(2+) contacts are provided by Cys302, Cys304, Cys307, and His333.

This sequence belongs to the queuine tRNA-ribosyltransferase family. As to quaternary structure, homodimer. Within each dimer, one monomer is responsible for RNA recognition and catalysis, while the other monomer binds to the replacement base PreQ1. It depends on Zn(2+) as a cofactor.

The enzyme catalyses 7-aminomethyl-7-carbaguanine + guanosine(34) in tRNA = 7-aminomethyl-7-carbaguanosine(34) in tRNA + guanine. The protein operates within tRNA modification; tRNA-queuosine biosynthesis. In terms of biological role, catalyzes the base-exchange of a guanine (G) residue with the queuine precursor 7-aminomethyl-7-deazaguanine (PreQ1) at position 34 (anticodon wobble position) in tRNAs with GU(N) anticodons (tRNA-Asp, -Asn, -His and -Tyr). Catalysis occurs through a double-displacement mechanism. The nucleophile active site attacks the C1' of nucleotide 34 to detach the guanine base from the RNA, forming a covalent enzyme-RNA intermediate. The proton acceptor active site deprotonates the incoming PreQ1, allowing a nucleophilic attack on the C1' of the ribose to form the product. After dissociation, two additional enzymatic reactions on the tRNA convert PreQ1 to queuine (Q), resulting in the hypermodified nucleoside queuosine (7-(((4,5-cis-dihydroxy-2-cyclopenten-1-yl)amino)methyl)-7-deazaguanosine). The chain is Queuine tRNA-ribosyltransferase from Shewanella sediminis (strain HAW-EB3).